The chain runs to 267 residues: 4-hydroxy-tetrahydrodipicolinate reductase (267 aa).

Residues 12–17 (GPRGRM), 100–102 (GTT), and 126–129 (APNF) each bind NAD(+). Catalysis depends on histidine 156, which acts as the Proton donor/acceptor. Histidine 157 serves as a coordination point for (S)-2,3,4,5-tetrahydrodipicolinate. Lysine 160 (proton donor) is an active-site residue. 166–167 (GT) contributes to the (S)-2,3,4,5-tetrahydrodipicolinate binding site.

Belongs to the DapB family.

It is found in the cytoplasm. It catalyses the reaction (S)-2,3,4,5-tetrahydrodipicolinate + NAD(+) + H2O = (2S,4S)-4-hydroxy-2,3,4,5-tetrahydrodipicolinate + NADH + H(+). The enzyme catalyses (S)-2,3,4,5-tetrahydrodipicolinate + NADP(+) + H2O = (2S,4S)-4-hydroxy-2,3,4,5-tetrahydrodipicolinate + NADPH + H(+). The protein operates within amino-acid biosynthesis; L-lysine biosynthesis via DAP pathway; (S)-tetrahydrodipicolinate from L-aspartate: step 4/4. Functionally, catalyzes the conversion of 4-hydroxy-tetrahydrodipicolinate (HTPA) to tetrahydrodipicolinate. The protein is 4-hydroxy-tetrahydrodipicolinate reductase of Bacillus subtilis (strain 168).